A 583-amino-acid chain; its full sequence is 2-succinyl-5-enolpyruvyl-6-hydroxy-3-cyclohexene-1-carboxylate synthase (583 aa).

It belongs to the TPP enzyme family. MenD subfamily. In terms of assembly, homodimer. Mg(2+) is required as a cofactor. Mn(2+) serves as cofactor. It depends on thiamine diphosphate as a cofactor.

It catalyses the reaction isochorismate + 2-oxoglutarate + H(+) = 5-enolpyruvoyl-6-hydroxy-2-succinyl-cyclohex-3-ene-1-carboxylate + CO2. It functions in the pathway quinol/quinone metabolism; 1,4-dihydroxy-2-naphthoate biosynthesis; 1,4-dihydroxy-2-naphthoate from chorismate: step 2/7. Its pathway is cofactor biosynthesis; phylloquinone biosynthesis. Catalyzes the thiamine diphosphate-dependent decarboxylation of 2-oxoglutarate and the subsequent addition of the resulting succinic semialdehyde-thiamine pyrophosphate anion to isochorismate to yield 2-succinyl-5-enolpyruvyl-6-hydroxy-3-cyclohexene-1-carboxylate (SEPHCHC). The sequence is that of 2-succinyl-5-enolpyruvyl-6-hydroxy-3-cyclohexene-1-carboxylate synthase from Trichormus variabilis (strain ATCC 29413 / PCC 7937) (Anabaena variabilis).